The primary structure comprises 458 residues: Opine oxidase subunit A (458 aa).

It to T-protein and to dimethylglycine dehydrogenase. As to quaternary structure, heterodimer of a subunit A and a subunit B.

The protein operates within opine metabolism; octopine degradation. Its function is as follows. Oxidative cleavage of octopine into L-arginine and pyruvate. The polypeptide is Opine oxidase subunit A (ooxA) (Rhizobium meliloti (strain 1021) (Ensifer meliloti)).